The sequence spans 230 residues: 2,3-bisphosphoglycerate-dependent phosphoglycerate mutase 2 (230 aa).

Residues 8–15, 21–22, Arg60, 87–90, Lys98, 114–115, and 183–184 contribute to the substrate site; these read RHGQSEWN, TG, ERHY, RR, and GN. His9 (tele-phosphohistidine intermediate) is an active-site residue. Glu87 acts as the Proton donor/acceptor in catalysis.

The protein belongs to the phosphoglycerate mutase family. BPG-dependent PGAM subfamily.

It catalyses the reaction (2R)-2-phosphoglycerate = (2R)-3-phosphoglycerate. Its pathway is carbohydrate degradation; glycolysis; pyruvate from D-glyceraldehyde 3-phosphate: step 3/5. In terms of biological role, catalyzes the interconversion of 2-phosphoglycerate and 3-phosphoglycerate. This Lactiplantibacillus plantarum (strain ATCC BAA-793 / NCIMB 8826 / WCFS1) (Lactobacillus plantarum) protein is 2,3-bisphosphoglycerate-dependent phosphoglycerate mutase 2.